We begin with the raw amino-acid sequence, 91 residues long: Uteroglobin (91 aa).

The first 21 residues, 1-21 (MKLTIAIVLVTLTLFCRPAST), serve as a signal peptide directing secretion.

It belongs to the secretoglobin family. As to quaternary structure, antiparallel homodimer; disulfide-linked. Interaction with LMBR1L is controversial.

The protein localises to the secreted. Functionally, binds phosphatidylcholine, phosphatidylinositol, polychlorinated biphenyls (PCB) and weakly progesterone, potent inhibitor of phospholipase A2. The protein is Uteroglobin (SCGB1A1) of Bos taurus (Bovine).